Consider the following 320-residue polypeptide: Cytochrome f (320 aa).

The first 35 residues, 1-35 (MHTKNLFYSRPQQITQYLSAFLMMVILTRTSISSA), serve as a signal peptide directing secretion. 4 residues coordinate heme: Tyr36, Cys56, Cys59, and His60. Residues 286-306 (VQVLLFFFASIILAQIFLVLK) traverse the membrane as a helical segment.

The protein belongs to the cytochrome f family. As to quaternary structure, the 4 large subunits of the cytochrome b6-f complex are cytochrome b6, subunit IV (17 kDa polypeptide, petD), cytochrome f and the Rieske protein, while the 4 small subunits are PetG, PetL, PetM and PetN. The complex functions as a dimer. Heme is required as a cofactor.

The protein resides in the plastid thylakoid membrane. Functionally, component of the cytochrome b6-f complex, which mediates electron transfer between photosystem II (PSII) and photosystem I (PSI), cyclic electron flow around PSI, and state transitions. The polypeptide is Cytochrome f (Cuscuta obtusiflora (Peruvian dodder)).